The chain runs to 216 residues: Probable GTP-binding protein EngB (216 aa).

The EngB-type G domain occupies 37-214; it reads DGLEVAFAGR…RAAMIRLLDE (178 aa). GTP-binding positions include 45–52, 72–76, 92–95, 159–162, and 193–195; these read GRSNVGKS, GRTQE, DMPG, TKAD, and TSS. Residues serine 52 and threonine 74 each contribute to the Mg(2+) site.

This sequence belongs to the TRAFAC class TrmE-Era-EngA-EngB-Septin-like GTPase superfamily. EngB GTPase family. It depends on Mg(2+) as a cofactor.

In terms of biological role, necessary for normal cell division and for the maintenance of normal septation. This is Probable GTP-binding protein EngB from Rhodopseudomonas palustris (strain HaA2).